A 435-amino-acid chain; its full sequence is tRNA modification GTPase MnmE (435 aa).

R20, E77, and K117 together coordinate (6S)-5-formyl-5,6,7,8-tetrahydrofolate. Residues 214–359 (GLKIVIAGAP…FIKKLESFCH (146 aa)) enclose the TrmE-type G domain. Residues 224-229 (NSGKSS), 243-249 (TEEAGTT), and 268-271 (DTAG) contribute to the GTP site. Mg(2+) contacts are provided by S228 and T249. K435 is a (6S)-5-formyl-5,6,7,8-tetrahydrofolate binding site.

Belongs to the TRAFAC class TrmE-Era-EngA-EngB-Septin-like GTPase superfamily. TrmE GTPase family. As to quaternary structure, homodimer. Heterotetramer of two MnmE and two MnmG subunits. The cofactor is K(+).

It localises to the cytoplasm. Functionally, exhibits a very high intrinsic GTPase hydrolysis rate. Involved in the addition of a carboxymethylaminomethyl (cmnm) group at the wobble position (U34) of certain tRNAs, forming tRNA-cmnm(5)s(2)U34. This chain is tRNA modification GTPase MnmE, found in Bartonella tribocorum (strain CIP 105476 / IBS 506).